The sequence spans 445 residues: Phosphoglucosamine mutase (445 aa).

Catalysis depends on S99, which acts as the Phosphoserine intermediate. 4 residues coordinate Mg(2+): S99, D242, D244, and D246. S99 bears the Phosphoserine mark.

It belongs to the phosphohexose mutase family. The cofactor is Mg(2+). In terms of processing, activated by phosphorylation.

It carries out the reaction alpha-D-glucosamine 1-phosphate = D-glucosamine 6-phosphate. Catalyzes the conversion of glucosamine-6-phosphate to glucosamine-1-phosphate. In Campylobacter jejuni subsp. jejuni serotype O:6 (strain 81116 / NCTC 11828), this protein is Phosphoglucosamine mutase.